Reading from the N-terminus, the 142-residue chain is ATP synthase epsilon chain (142 aa).

The protein belongs to the ATPase epsilon chain family. As to quaternary structure, F-type ATPases have 2 components, CF(1) - the catalytic core - and CF(0) - the membrane proton channel. CF(1) has five subunits: alpha(3), beta(3), gamma(1), delta(1), epsilon(1). CF(0) has three main subunits: a, b and c.

It is found in the cell inner membrane. Produces ATP from ADP in the presence of a proton gradient across the membrane. This is ATP synthase epsilon chain from Koribacter versatilis (strain Ellin345).